The sequence spans 79 residues: Small polypeptide DEVIL 8 (79 aa).

The segment covering 1 to 12 has biased composition (polar residues); it reads MSRLRNSAQLQL. Residues 1 to 37 are disordered; it reads MSRLRNSAQLQLSKKESLGDNGGALNTTRSSRQKQGK. The N-linked (GlcNAc...) asparagine glycan is linked to N26. Residues 39 to 70 are required for DVL/RTFL small polypeptide activity; sequence GFTRKCGRLVKEQRARFYIMRRCVVMLICWTD. A helical transmembrane segment spans residues 55-71; sequence FYIMRRCVVMLICWTDH. N74 is a glycosylation site (N-linked (GlcNAc...) asparagine).

It belongs to the DVL/RTFL small polypeptides family.

Its subcellular location is the cell membrane. In terms of biological role, small polypeptide acting as a regulatory molecule which coordinates cellular responses required for differentiation, growth and development, probably by restricting polar cell proliferation in lateral organs and coordinating socket cell recruitment and differentiation at trichome sites. The polypeptide is Small polypeptide DEVIL 8 (Arabidopsis thaliana (Mouse-ear cress)).